The primary structure comprises 340 residues: Phosphoribosylformylglycinamidine cyclo-ligase (340 aa).

It belongs to the AIR synthase family.

Its subcellular location is the cytoplasm. It carries out the reaction 2-formamido-N(1)-(5-O-phospho-beta-D-ribosyl)acetamidine + ATP = 5-amino-1-(5-phospho-beta-D-ribosyl)imidazole + ADP + phosphate + H(+). It functions in the pathway purine metabolism; IMP biosynthesis via de novo pathway; 5-amino-1-(5-phospho-D-ribosyl)imidazole from N(2)-formyl-N(1)-(5-phospho-D-ribosyl)glycinamide: step 2/2. This is Phosphoribosylformylglycinamidine cyclo-ligase from Streptococcus pneumoniae serotype 2 (strain D39 / NCTC 7466).